The following is a 252-amino-acid chain: Thiazole synthase (252 aa).

Lys95 (schiff-base intermediate with DXP) is an active-site residue. Residues Gly156, Ala182 to Gly183, and Asn204 to Thr205 contribute to the 1-deoxy-D-xylulose 5-phosphate site.

Belongs to the ThiG family. Homotetramer. Forms heterodimers with either ThiH or ThiS.

Its subcellular location is the cytoplasm. It catalyses the reaction [ThiS sulfur-carrier protein]-C-terminal-Gly-aminoethanethioate + 2-iminoacetate + 1-deoxy-D-xylulose 5-phosphate = [ThiS sulfur-carrier protein]-C-terminal Gly-Gly + 2-[(2R,5Z)-2-carboxy-4-methylthiazol-5(2H)-ylidene]ethyl phosphate + 2 H2O + H(+). It functions in the pathway cofactor biosynthesis; thiamine diphosphate biosynthesis. Functionally, catalyzes the rearrangement of 1-deoxy-D-xylulose 5-phosphate (DXP) to produce the thiazole phosphate moiety of thiamine. Sulfur is provided by the thiocarboxylate moiety of the carrier protein ThiS. In vitro, sulfur can be provided by H(2)S. The chain is Thiazole synthase from Shewanella sp. (strain ANA-3).